We begin with the raw amino-acid sequence, 188 residues long: Shikimate kinase (188 aa).

Glycine 21–threonine 26 provides a ligand contact to ATP. A Mg(2+)-binding site is contributed by threonine 25. Residues aspartate 43, arginine 67, and glycine 90 each contribute to the substrate site. Arginine 130 contacts ATP. Arginine 148 provides a ligand contact to substrate.

The protein belongs to the shikimate kinase family. In terms of assembly, monomer. Mg(2+) is required as a cofactor.

The protein localises to the cytoplasm. The enzyme catalyses shikimate + ATP = 3-phosphoshikimate + ADP + H(+). It functions in the pathway metabolic intermediate biosynthesis; chorismate biosynthesis; chorismate from D-erythrose 4-phosphate and phosphoenolpyruvate: step 5/7. Catalyzes the specific phosphorylation of the 3-hydroxyl group of shikimic acid using ATP as a cosubstrate. The polypeptide is Shikimate kinase (Geobacillus thermodenitrificans (strain NG80-2)).